Consider the following 149-residue polypeptide: Lipoprotein signal peptidase (149 aa).

A run of 2 helical transmembrane segments spans residues 53-73 and 89-109; these read MPGK…ALVI and GLIA…GFVI. Catalysis depends on residues aspartate 110 and aspartate 124. A helical membrane pass occupies residues 119–139; sequence VFNLADSAIVCGGILLLILVL.

The protein belongs to the peptidase A8 family.

Its subcellular location is the cell membrane. It carries out the reaction Release of signal peptides from bacterial membrane prolipoproteins. Hydrolyzes -Xaa-Yaa-Zaa-|-(S,diacylglyceryl)Cys-, in which Xaa is hydrophobic (preferably Leu), and Yaa (Ala or Ser) and Zaa (Gly or Ala) have small, neutral side chains.. Its pathway is protein modification; lipoprotein biosynthesis (signal peptide cleavage). In terms of biological role, this protein specifically catalyzes the removal of signal peptides from prolipoproteins. This Syntrophomonas wolfei subsp. wolfei (strain DSM 2245B / Goettingen) protein is Lipoprotein signal peptidase.